We begin with the raw amino-acid sequence, 854 residues long: DNA mismatch repair protein MutS (854 aa).

ATP is bound at residue 614–621 (GPNMGGKS).

Belongs to the DNA mismatch repair MutS family.

Functionally, this protein is involved in the repair of mismatches in DNA. It is possible that it carries out the mismatch recognition step. This protein has a weak ATPase activity. This Sodalis glossinidius (strain morsitans) protein is DNA mismatch repair protein MutS.